Consider the following 359-residue polypeptide: DNA-directed RNA polymerase RPB3-11 homolog (359 aa).

The protein in the N-terminal section; belongs to the archaeal RpoD/eukaryotic RPB3 RNA polymerase subunit family. In the C-terminal section; belongs to the archaeal RpoL/eukaryotic RPB11/RPC19 RNA polymerase subunit family. Part of the viral DNA-directed RNA polymerase that consists of 8 polII-like subunits (RPB1, RPB2, RPB3, RPB5, RPB6, RPB7, RPB9, RPB10), a capping enzyme and a termination factor.

Its subcellular location is the host cytoplasm. It localises to the virion. Its function is as follows. Component of the DNA-directed RNA polymerase (RNAP) that catalyzes the transcription in the cytoplasm of viral DNA into RNA using the four ribonucleoside triphosphates as substrates. This is DNA-directed RNA polymerase RPB3-11 homolog from Ornithodoros (relapsing fever ticks).